The chain runs to 158 residues: MLSGKDLGRAIEQAINKKIASGSVKSKAEVARHFKVQPPSIYDWIKKGSISKDKLPELWRFFSDVVGPEHWGLNEYPIPTPTNSDTKSELLDINNLYQAASDEIRAIVAFLLSGNATEPDWVDHDVRAYIAAMEMKVGKYLKALESERKSQNITKTGT.

As to quaternary structure, homooctamer.

Its function is as follows. Transcriptional regulator that represses the expression of ydaS and ydaT under normal physiological conditions. It binds to its own upstream sequence and represses the adjacent and divergently coded ydaS-ydaT operon. RacR-mediated down-regulation of ydaS and ydaT may be critical for cell survival. RacR ensures that the prophage DNA is maintained in the genome. When the expression of the racR gene is reduced, the prophage Rac is excised from the genome, possibly to counteract the lethal toxicity of YdaT. In Escherichia coli (strain K12), this protein is DNA-binding transcriptional repressor RacR (racR).